The chain runs to 306 residues: GTPase Era (306 aa).

The 168-residue stretch at 14 to 181 folds into the Era-type G domain; it reads KSGFIGIIGR…LDELWKYLPE (168 aa). The tract at residues 22–29 is G1; it reads GRPNVGKS. GTP is bound at residue 22 to 29; sequence GRPNVGKS. The segment at 48-52 is G2; sequence QTTRN. The tract at residues 69–72 is G3; that stretch reads DTPG. Residues 69-73 and 131-134 contribute to the GTP site; these read DTPGI and NKID. Residues 131-134 form a G4 region; sequence NKID. The G5 stretch occupies residues 160-162; the sequence is ISA. One can recognise a KH type-2 domain in the interval 212–290; the sequence is THKEIPYSSA…FLELFVRVRK (79 aa).

It belongs to the TRAFAC class TrmE-Era-EngA-EngB-Septin-like GTPase superfamily. Era GTPase family. In terms of assembly, monomer.

The protein localises to the cytoplasm. Its subcellular location is the cell inner membrane. An essential GTPase that binds both GDP and GTP, with rapid nucleotide exchange. Plays a role in 16S rRNA processing and 30S ribosomal subunit biogenesis and possibly also in cell cycle regulation and energy metabolism. This chain is GTPase Era, found in Syntrophus aciditrophicus (strain SB).